A 483-amino-acid polypeptide reads, in one-letter code: Trigger factor (483 aa).

Residues 162–243 (GDYVSLDLSA…VRGVKEKELP (82 aa)) form the PPIase FKBP-type domain. The disordered stretch occupies residues 459-483 (AVAPGDGDATVEPVEPVEAETDGNG). Positions 473 to 483 (EPVEAETDGNG) are enriched in acidic residues.

It belongs to the FKBP-type PPIase family. Tig subfamily.

The protein localises to the cytoplasm. The enzyme catalyses [protein]-peptidylproline (omega=180) = [protein]-peptidylproline (omega=0). In terms of biological role, involved in protein export. Acts as a chaperone by maintaining the newly synthesized protein in an open conformation. Functions as a peptidyl-prolyl cis-trans isomerase. The chain is Trigger factor from Frankia casuarinae (strain DSM 45818 / CECT 9043 / HFP020203 / CcI3).